The chain runs to 319 residues: Aspartate carbamoyltransferase catalytic subunit (319 aa).

Residues Arg55 and Thr56 each contribute to the carbamoyl phosphate site. Lys83 contacts L-aspartate. The carbamoyl phosphate site is built by Arg105, His144, and Gln147. Arg177 and Arg231 together coordinate L-aspartate. Carbamoyl phosphate contacts are provided by Gly272 and Pro273.

This sequence belongs to the aspartate/ornithine carbamoyltransferase superfamily. ATCase family. As to quaternary structure, heterododecamer (2C3:3R2) of six catalytic PyrB chains organized as two trimers (C3), and six regulatory PyrI chains organized as three dimers (R2).

The enzyme catalyses carbamoyl phosphate + L-aspartate = N-carbamoyl-L-aspartate + phosphate + H(+). It participates in pyrimidine metabolism; UMP biosynthesis via de novo pathway; (S)-dihydroorotate from bicarbonate: step 2/3. Its function is as follows. Catalyzes the condensation of carbamoyl phosphate and aspartate to form carbamoyl aspartate and inorganic phosphate, the committed step in the de novo pyrimidine nucleotide biosynthesis pathway. This is Aspartate carbamoyltransferase catalytic subunit from Nocardia farcinica (strain IFM 10152).